A 121-amino-acid polypeptide reads, in one-letter code: Small ribosomal subunit protein bS6 (121 aa).

The interval 102–121 (MMRNVEREEARKAQQQEYAA) is disordered. A compositionally biased stretch (basic and acidic residues) spans 105–115 (NVEREEARKAQ).

Belongs to the bacterial ribosomal protein bS6 family.

Binds together with bS18 to 16S ribosomal RNA. This chain is Small ribosomal subunit protein bS6, found in Polaromonas sp. (strain JS666 / ATCC BAA-500).